We begin with the raw amino-acid sequence, 439 residues long: ATP-dependent protease ATPase subunit HslU (439 aa).

ATP-binding positions include isoleucine 17, 59–64 (GVGKTE), aspartate 251, glutamate 317, and arginine 389.

Belongs to the ClpX chaperone family. HslU subfamily. In terms of assembly, a double ring-shaped homohexamer of HslV is capped on each side by a ring-shaped HslU homohexamer. The assembly of the HslU/HslV complex is dependent on binding of ATP.

It localises to the cytoplasm. ATPase subunit of a proteasome-like degradation complex; this subunit has chaperone activity. The binding of ATP and its subsequent hydrolysis by HslU are essential for unfolding of protein substrates subsequently hydrolyzed by HslV. HslU recognizes the N-terminal part of its protein substrates and unfolds these before they are guided to HslV for hydrolysis. This is ATP-dependent protease ATPase subunit HslU from Campylobacter jejuni (strain RM1221).